Here is a 397-residue protein sequence, read N- to C-terminus: MSNSFVLVINSGSSSLKFAVIDSVSGDAVLSGLGECFGLSDARMSWKFNGEKKEISIEGDDSHHKIAIGKLVGLTEELGLAQDIVAVGHRIVHGGEKFTKTVRITEEVTQEIEKLADLAPLHNPAGAIGIRAAVEAFPSLPQFAVFDTAFHQTMPQRAFTGAIAKELYTDFGIRRYGFHGTSHYFVSREAAKMINKPIEESSFISVHLGNGASVCAINNGESVDTSMGFTPLSGLMMGTRCGDLDPGIIEYLLKKGWSQEKVFNSLNKASGFLGVSGLTSDARGILEAMEEGHEGAALAFQVFTYRVSKYIASYLAALDSFDGIIFTGGIGENSMPIRREILKNLKLLGFVEDVKGNEDARFGNAGVIATSELLGAKALVIPTNEEWVIAQQSVELL.

Asn10 is a Mg(2+) binding site. Lys17 is a binding site for ATP. Arg90 serves as a coordination point for substrate. Asp147 functions as the Proton donor/acceptor in the catalytic mechanism. Residues 207-211, 281-283, and 329-333 each bind ATP; these read HLGNG, DAR, and GIGEN. Position 385 (Glu385) interacts with Mg(2+).

The protein belongs to the acetokinase family. Homodimer. Mg(2+) serves as cofactor. The cofactor is Mn(2+).

The protein localises to the cytoplasm. The catalysed reaction is acetate + ATP = acetyl phosphate + ADP. The protein operates within metabolic intermediate biosynthesis; acetyl-CoA biosynthesis; acetyl-CoA from acetate: step 1/2. Its function is as follows. Catalyzes the formation of acetyl phosphate from acetate and ATP. Can also catalyze the reverse reaction. The chain is Acetate kinase 2 from Vibrio parahaemolyticus serotype O3:K6 (strain RIMD 2210633).